Reading from the N-terminus, the 132-residue chain is Small ribosomal subunit protein uS8 (132 aa).

It belongs to the universal ribosomal protein uS8 family. Part of the 30S ribosomal subunit. Contacts proteins S5 and S12.

Functionally, one of the primary rRNA binding proteins, it binds directly to 16S rRNA central domain where it helps coordinate assembly of the platform of the 30S subunit. The sequence is that of Small ribosomal subunit protein uS8 from Sinorhizobium medicae (strain WSM419) (Ensifer medicae).